The following is a 101-amino-acid chain: Large ribosomal subunit protein uL23 (101 aa).

It belongs to the universal ribosomal protein uL23 family. In terms of assembly, part of the 50S ribosomal subunit. Contacts protein L29, and trigger factor when it is bound to the ribosome.

Functionally, one of the early assembly proteins it binds 23S rRNA. One of the proteins that surrounds the polypeptide exit tunnel on the outside of the ribosome. Forms the main docking site for trigger factor binding to the ribosome. The chain is Large ribosomal subunit protein uL23 from Aromatoleum aromaticum (strain DSM 19018 / LMG 30748 / EbN1) (Azoarcus sp. (strain EbN1)).